A 220-amino-acid polypeptide reads, in one-letter code: 7-cyano-7-deazaguanine synthase (220 aa).

An ATP-binding site is contributed by 11–21; the sequence is VSGGMDSVTLM. 4 residues coordinate Zn(2+): cysteine 186, cysteine 194, cysteine 197, and cysteine 200.

This sequence belongs to the QueC family. Zn(2+) serves as cofactor.

The catalysed reaction is 7-carboxy-7-deazaguanine + NH4(+) + ATP = 7-cyano-7-deazaguanine + ADP + phosphate + H2O + H(+). It participates in purine metabolism; 7-cyano-7-deazaguanine biosynthesis. In terms of biological role, catalyzes the ATP-dependent conversion of 7-carboxy-7-deazaguanine (CDG) to 7-cyano-7-deazaguanine (preQ(0)). In Porphyromonas gingivalis (strain ATCC 33277 / DSM 20709 / CIP 103683 / JCM 12257 / NCTC 11834 / 2561), this protein is 7-cyano-7-deazaguanine synthase.